Reading from the N-terminus, the 392-residue chain is MKIHEYQGKAILRKYGVAVPRGEMVTTREEAERVANDLMHDGAKGVVVKAQIHAGGRGKGGGVKIAKSVDEAGQLAGKILGMTLITHQTGPEGKKVQRLLIEETLPIERELYLSIVLDRSNGKPVFMASAAGGMEIEEVAAKDPNAIIKEWIEPGYGLGAFQARKIAFKLGLKPELIGQAVKFMQALYKTYDETDASLVEINPFITTSDNRLFALDAKFNFDDNGLFRHPDLKDLRDVTEEDPLEVEASKYGLNYIKLDGTVGCMVNGAGLAMATMDIIQYAGGMPANFLDVGGGANAEQVTHAFEILLSDKNVKAVLINIFGGILRVDTLATGVVQAATQTKIQLPIVLRLEGTNVEQGREILQKSGLNFIVAETMKDAAEKVVAAAKGVK.

Positions 9–247 (KAILRKYGVA…VTEEDPLEVE (239 aa)) constitute an ATP-grasp domain. Residues Lys-49, 56 to 58 (GRG), Glu-102, Leu-105, and Glu-110 each bind ATP. The Mg(2+) site is built by Asn-202 and Asp-216. Substrate-binding positions include Asn-267 and 324–326 (GIL).

The protein belongs to the succinate/malate CoA ligase beta subunit family. Heterotetramer of two alpha and two beta subunits. Mg(2+) is required as a cofactor.

The catalysed reaction is succinate + ATP + CoA = succinyl-CoA + ADP + phosphate. It carries out the reaction GTP + succinate + CoA = succinyl-CoA + GDP + phosphate. Its pathway is carbohydrate metabolism; tricarboxylic acid cycle; succinate from succinyl-CoA (ligase route): step 1/1. Its function is as follows. Succinyl-CoA synthetase functions in the citric acid cycle (TCA), coupling the hydrolysis of succinyl-CoA to the synthesis of either ATP or GTP and thus represents the only step of substrate-level phosphorylation in the TCA. The beta subunit provides nucleotide specificity of the enzyme and binds the substrate succinate, while the binding sites for coenzyme A and phosphate are found in the alpha subunit. In Koribacter versatilis (strain Ellin345), this protein is Succinate--CoA ligase [ADP-forming] subunit beta.